The following is a 669-amino-acid chain: Small ribosomal subunit protein mS39 (669 aa).

The N-terminal 13 residues, 1–13 (MAAPCVRLGSVRC), are a transit peptide targeting the mitochondrion. 11 PPR repeats span residues 129–163 (IEGV…GTAP), 164–199 (SLET…DDQD), 209–239 (RPGQ…MPER), 240–274 (NAHS…RLTA), 275–314 (DVQT…NVRP), 315–351 (NLLT…NIEP), 352–392 (SLGT…FTLR), 396–430 (DVYF…DNRG), 438–472 (QSTY…LYYP), 473–507 (NSRG…GHSN), and 556–590 (SSAS…HRVP). Residues 186-218 (DIQTSEQNQQDDQDQQETEDSKKRPGQYRKASE) form a disordered region. Over residues 194–203 (QQDDQDQQET) the composition is skewed to acidic residues. Residues 648–669 (EDLQKSHSSSSSSSESSDSDRE) form a disordered region. The segment covering 653-663 (SHSSSSSSSES) has biased composition (low complexity).

It belongs to the mitochondrion-specific ribosomal protein mS39 family.

It is found in the mitochondrion. In terms of biological role, mitochondrial protein that may have a role in mitochondrial translation. The chain is Small ribosomal subunit protein mS39 (ptcd3) from Xenopus laevis (African clawed frog).